A 635-amino-acid polypeptide reads, in one-letter code: Threonine--tRNA ligase (635 aa).

The region spanning 1–61 (MIQITLPDSS…SQDSALSIVT (61 aa)) is the TGS domain. The segment at 242 to 533 (DHRKLGKELD…LIEEHAGALP (292 aa)) is catalytic. Positions 333, 384, and 510 each coordinate Zn(2+).

This sequence belongs to the class-II aminoacyl-tRNA synthetase family. In terms of assembly, homodimer. Zn(2+) serves as cofactor.

Its subcellular location is the cytoplasm. It catalyses the reaction tRNA(Thr) + L-threonine + ATP = L-threonyl-tRNA(Thr) + AMP + diphosphate + H(+). Catalyzes the attachment of threonine to tRNA(Thr) in a two-step reaction: L-threonine is first activated by ATP to form Thr-AMP and then transferred to the acceptor end of tRNA(Thr). Also edits incorrectly charged L-seryl-tRNA(Thr). The sequence is that of Threonine--tRNA ligase from Polaromonas naphthalenivorans (strain CJ2).